We begin with the raw amino-acid sequence, 209 residues long: NADH-ubiquinone oxidoreductase subunit 9 (209 aa).

The protein belongs to the complex I 30 kDa subunit family. Complex I is composed of about 30 different subunits.

The protein localises to the mitochondrion inner membrane. It catalyses the reaction a ubiquinone + NADH + 5 H(+)(in) = a ubiquinol + NAD(+) + 4 H(+)(out). Core subunit of the mitochondrial membrane respiratory chain NADH dehydrogenase (Complex I) that is believed to belong to the minimal assembly required for catalysis. Complex I functions in the transfer of electrons from NADH to the respiratory chain. The immediate electron acceptor for the enzyme is believed to be ubiquinone. The polypeptide is NADH-ubiquinone oxidoreductase subunit 9 (nad9) (Dictyostelium citrinum (Slime mold)).